The sequence spans 548 residues: Glucose-6-phosphate isomerase (548 aa).

Catalysis depends on Glu359, which acts as the Proton donor. Active-site residues include His390 and Lys510.

It belongs to the GPI family.

Its subcellular location is the cytoplasm. The enzyme catalyses alpha-D-glucose 6-phosphate = beta-D-fructose 6-phosphate. The protein operates within carbohydrate biosynthesis; gluconeogenesis. It functions in the pathway carbohydrate degradation; glycolysis; D-glyceraldehyde 3-phosphate and glycerone phosphate from D-glucose: step 2/4. Its function is as follows. Catalyzes the reversible isomerization of glucose-6-phosphate to fructose-6-phosphate. The sequence is that of Glucose-6-phosphate isomerase from Gloeobacter violaceus (strain ATCC 29082 / PCC 7421).